A 312-amino-acid chain; its full sequence is tRNA dimethylallyltransferase (312 aa).

Glycine 11–threonine 18 contacts ATP. Threonine 13–threonine 18 lines the substrate pocket. Residues aspartate 36–glutamine 39 are interaction with substrate tRNA.

This sequence belongs to the IPP transferase family. As to quaternary structure, monomer. Requires Mg(2+) as cofactor.

It carries out the reaction adenosine(37) in tRNA + dimethylallyl diphosphate = N(6)-dimethylallyladenosine(37) in tRNA + diphosphate. In terms of biological role, catalyzes the transfer of a dimethylallyl group onto the adenine at position 37 in tRNAs that read codons beginning with uridine, leading to the formation of N6-(dimethylallyl)adenosine (i(6)A). The polypeptide is tRNA dimethylallyltransferase (Thermosynechococcus vestitus (strain NIES-2133 / IAM M-273 / BP-1)).